The primary structure comprises 92 residues: MGRSLKKGPFVDDHLMKKVEAQQGAEKKKVIKTWSRRSTIFPSFVGFTIAVYDGRKHVPVYIQEDMVGHKLGEFAPTRTYRGHVADDKKTKR.

The protein belongs to the universal ribosomal protein uS19 family.

Functionally, protein S19 forms a complex with S13 that binds strongly to the 16S ribosomal RNA. The sequence is that of Small ribosomal subunit protein uS19 from Enterococcus faecalis (strain ATCC 700802 / V583).